Here is a 240-residue protein sequence, read N- to C-terminus: Arylmalonate decarboxylase (240 aa).

It catalyses the reaction 2-aryl-2-methylmalonate + H(+) = 2-arylpropionate + CO2. This is Arylmalonate decarboxylase from Bordetella bronchiseptica (Alcaligenes bronchisepticus).